A 328-amino-acid polypeptide reads, in one-letter code: DNA-directed RNA polymerase subunit alpha 2 (328 aa).

Positions 1–234 (MQGSVIEFLK…EQLDAFVDLR (234 aa)) are alpha N-terminal domain (alpha-NTD). Residues 248–328 (FDPILLRPVD…NWPPASLSED (81 aa)) form an alpha C-terminal domain (alpha-CTD) region.

It belongs to the RNA polymerase alpha chain family. In terms of assembly, homodimer. The RNAP catalytic core consists of 2 alpha, 1 beta, 1 beta' and 1 omega subunit. When a sigma factor is associated with the core the holoenzyme is formed, which can initiate transcription.

It catalyses the reaction RNA(n) + a ribonucleoside 5'-triphosphate = RNA(n+1) + diphosphate. In terms of biological role, DNA-dependent RNA polymerase catalyzes the transcription of DNA into RNA using the four ribonucleoside triphosphates as substrates. The chain is DNA-directed RNA polymerase subunit alpha 2 from Psychromonas ingrahamii (strain DSM 17664 / CCUG 51855 / 37).